The chain runs to 963 residues: Protein suppressor of white apricot (963 aa).

An SURP motif 1 repeat occupies 234-276 (IIEKTARFIATQGAQMEILIKAKQANNTQFDFLTQGGHLQPYY). 2 disordered regions span residues 290–322 (PAPQ…RRNP) and 360–430 (EDES…EPPQ). Positions 300-317 (NTDKEAPSADDHSEEVAG) are enriched in basic and acidic residues. Polar residues predominate over residues 364–375 (SNPGNSQHSGGT). Basic and acidic residues predominate over residues 407–418 (THEEESSNREQQ). Phosphoserine occurs at positions 438, 447, 448, and 450. The segment at 445–470 (NYSSESEEEEDQVQPEKEEEKKPEPV) is disordered. A compositionally biased stretch (basic and acidic residues) spans 458 to 468 (QPEKEEEKKPE). Residues 483-523 (IIDKTATYVIKNGRQFEETLRTKSVDRFSFLLPANEYYPYY) form an SURP motif 2 repeat. Disordered regions lie at residues 593-613 (PQEA…HVRP), 634-662 (TAGQ…ERVK), and 716-963 (PPES…SSSP). Over residues 637–651 (QKGNITASPSCSSPQ) the composition is skewed to polar residues. At Ser649 the chain carries Phosphoserine. Residues 652 to 662 (KEQRQAEERVK) are compositionally biased toward basic and acidic residues. Residues 718–727 (ESAAGAATAD) are compositionally biased toward low complexity. Positions 768–778 (DEEDDDEEDGG) are enriched in acidic residues. Polar residues predominate over residues 787–796 (NDDSTNTFTS). The segment covering 799 to 809 (VLPPTAAPPPA) has biased composition (pro residues). Positions 820 to 830 (QLVATTSTRSS) are enriched in low complexity. Over residues 831-847 (SSRHLKTHRRSRSRSKN) the composition is skewed to basic residues. Low complexity predominate over residues 848–858 (VRSSDSSPSSR). 2 stretches are compositionally biased toward basic residues: residues 861–870 (SRRRRQKSSR) and 882–913 (KSQH…RRSR). Residues Ser912, Ser914, and Ser916 each carry the phosphoserine modification. The segment covering 934 to 944 (AEQRRQQDRRR) has biased composition (basic and acidic residues). A compositionally biased stretch (basic residues) spans 945 to 963 (TPTKKSHKRHKRRRRSSSP).

The protein resides in the nucleus speckle. Its function is as follows. Regulator of pre-mRNA splicing (and, possibly, of other RNA processing events). Regulates its own expression at the level of RNA processing. The sequence is that of Protein suppressor of white apricot (su(w[a])) from Drosophila melanogaster (Fruit fly).